We begin with the raw amino-acid sequence, 252 residues long: MILAVDIGNTTTEIGYIKDLDKIETLKFKTDHGKTIDDWLINFSFFLNFYNLDETNINKIYISSVVPQVEEKITKALEKLLNVNPLLIGTDVKVPLKINYENPSEVGADRILNAFASINILNPPLIAIDFGTAVTFDVVNKNSEYDGGLIFPGLESSVNCLFSKTAKLPKVKIEKPSNIVGKNTISSIQSGIYNGYISLVEGVISKIEDEYKCKFNIILTGGHGKIISESLNLQHVFEQYLPIKGIYFLDKY.

ATP is bound at residue 6–13 (DIGNTTTE). Substrate-binding positions include Tyr-100 and 107 to 110 (GADR). The active-site Proton acceptor is Asp-109. Asp-129 contributes to the K(+) binding site. Position 132 (Thr-132) interacts with ATP. Residue Thr-184 coordinates substrate.

Belongs to the type III pantothenate kinase family. As to quaternary structure, homodimer. NH4(+) is required as a cofactor. K(+) serves as cofactor.

It is found in the cytoplasm. The enzyme catalyses (R)-pantothenate + ATP = (R)-4'-phosphopantothenate + ADP + H(+). It participates in cofactor biosynthesis; coenzyme A biosynthesis; CoA from (R)-pantothenate: step 1/5. Catalyzes the phosphorylation of pantothenate (Pan), the first step in CoA biosynthesis. This Sulfurihydrogenibium sp. (strain YO3AOP1) protein is Type III pantothenate kinase.